Consider the following 858-residue polypeptide: DNA mismatch repair protein MutS (858 aa).

609–616 (GPNMSGKS) is a binding site for ATP.

This sequence belongs to the DNA mismatch repair MutS family.

Functionally, this protein is involved in the repair of mismatches in DNA. It is possible that it carries out the mismatch recognition step. This protein has a weak ATPase activity. The chain is DNA mismatch repair protein MutS from Enterococcus faecalis (strain ATCC 700802 / V583).